A 780-amino-acid chain; its full sequence is Gelsolin (780 aa).

The N-terminal stretch at 1–25 (MAPYCSSLRSALLVLALCALSPSHA) is a signal peptide. A disordered region spans residues 28 to 48 (ASRGRAQERAPQSRVSETRPS). The tract at residues 51–174 (VVEHPEFLKA…YKKGGVASGF (124 aa)) is actin-severing. A Gelsolin-like 1 repeat occupies 74–155 (FDLVPVPPNL…EVQGFESSTF (82 aa)). Y84 is modified (phosphotyrosine). 6 residues coordinate Ca(2+): G90, D91, E122, D134, G139, and A141. An actin-actin interfilament contact point region spans residues 121–124 (DESG). Residue 160-167 (KSGLKYKK) participates in a 1,2-diacyl-sn-glycero-3-phospho-(1D-myo-inositol-4,5-bisphosphate) binding. Residue V170 participates in Ca(2+) binding. 186–194 (RLFQVKGRR) provides a ligand contact to a 1,2-diacyl-sn-glycero-3-phospho-(1D-myo-inositol-4,5-bisphosphate). A Gelsolin-like 2 repeat occupies 196–268 (VRATEVPVSW…SEEGSEPEAM (73 aa)). Ca(2+) contacts are provided by G211 and D212. Residues C213 and C226 are joined by a disulfide bond. E234, D284, E327, D328, and E352 together coordinate Ca(2+). A disordered region spans residues 244 to 286 (GIRDNERSGRAQVHVSEEGSEPEAMLQVLGPKPDLPQGTEDTA). One copy of the Gelsolin-like 3 repeat lies at 315–387 (DENPFAQSAL…LPEGGETPLF (73 aa)). Y407 and Y463 each carry phosphotyrosine. The segment at 432–780 (AAQHGMDDDG…LDRALAELAA (349 aa)) is actin-binding, Ca-sensitive. The Gelsolin-like 4 repeat unit spans residues 453-534 (SNKVLVDPAT…VQGKEPAHLM (82 aa)). Residues G469, D470, E500, D512, G517, P519, and T549 each contribute to the Ca(2+) site. One copy of the Gelsolin-like 5 repeat lies at 576-640 (AVEVMPKAGA…EEGSEPDGFW (65 aa)). K582 carries the post-translational modification N6-acetyllysine. 2 residues coordinate Ca(2+): N589 and D590. Position 601 is a phosphotyrosine (Y601). E612 serves as a coordination point for Ca(2+). Y649 is subject to Phosphotyrosine. A Gelsolin-like 6 repeat occupies 679–754 (IEEVPGELMQ…VRQGFEPPSF (76 aa)). Positions 694, 695, and 717 each coordinate Ca(2+). T740 carries the post-translational modification Phosphothreonine.

It belongs to the villin/gelsolin family. Binds to actin and to fibronectin. Identified in a complex composed of ACTA1, COBL, GSN and TMSB4X. Interacts with the inactive form of EIF2AK2/PKR. Interacts with FLII. Phosphorylated on tyrosine residues in vitro.

It is found in the secreted. Its subcellular location is the cytoplasm. The protein resides in the cytoskeleton. Functionally, calcium-regulated, actin-modulating protein that binds to the plus (or barbed) ends of actin monomers or filaments, preventing monomer exchange (end-blocking or capping). It can promote the assembly of monomers into filaments (nucleation) as well as sever filaments already formed. Plays a role in ciliogenesis. This Rattus norvegicus (Rat) protein is Gelsolin (Gsn).